A 636-amino-acid polypeptide reads, in one-letter code: 1-deoxy-D-xylulose-5-phosphate synthase (636 aa).

Thiamine diphosphate contacts are provided by residues His-74 and 115 to 117; that span reads GHA. Asp-146 is a Mg(2+) binding site. Residues 147 to 148, Asn-175, Tyr-285, and Glu-368 each bind thiamine diphosphate; that span reads GA. Mg(2+) is bound at residue Asn-175.

It belongs to the transketolase family. DXPS subfamily. In terms of assembly, homodimer. The cofactor is Mg(2+). Thiamine diphosphate serves as cofactor.

It carries out the reaction D-glyceraldehyde 3-phosphate + pyruvate + H(+) = 1-deoxy-D-xylulose 5-phosphate + CO2. It participates in metabolic intermediate biosynthesis; 1-deoxy-D-xylulose 5-phosphate biosynthesis; 1-deoxy-D-xylulose 5-phosphate from D-glyceraldehyde 3-phosphate and pyruvate: step 1/1. In terms of biological role, catalyzes the acyloin condensation reaction between C atoms 2 and 3 of pyruvate and glyceraldehyde 3-phosphate to yield 1-deoxy-D-xylulose-5-phosphate (DXP). This is 1-deoxy-D-xylulose-5-phosphate synthase from Anaeromyxobacter dehalogenans (strain 2CP-1 / ATCC BAA-258).